Reading from the N-terminus, the 301-residue chain is Putative S-adenosyl-L-methionine-dependent methyltransferase MT0851 (301 aa).

Residues Asp127 and 156–157 (DL) contribute to the S-adenosyl-L-methionine site.

This sequence belongs to the UPF0677 family.

Its function is as follows. Exhibits S-adenosyl-L-methionine-dependent methyltransferase activity. This chain is Putative S-adenosyl-L-methionine-dependent methyltransferase MT0851, found in Mycobacterium tuberculosis (strain CDC 1551 / Oshkosh).